The following is a 372-amino-acid chain: Glutamate 5-kinase (372 aa).

Lys14 is an ATP binding site. Substrate contacts are provided by Ser54, Asp141, and Asn153. Thr173–Asp174 contacts ATP. Residues Arg280 to Ser358 form the PUA domain.

It belongs to the glutamate 5-kinase family.

Its subcellular location is the cytoplasm. It catalyses the reaction L-glutamate + ATP = L-glutamyl 5-phosphate + ADP. It participates in amino-acid biosynthesis; L-proline biosynthesis; L-glutamate 5-semialdehyde from L-glutamate: step 1/2. Its function is as follows. Catalyzes the transfer of a phosphate group to glutamate to form L-glutamate 5-phosphate. This Pseudomonas entomophila (strain L48) protein is Glutamate 5-kinase.